Consider the following 291-residue polypeptide: Shikimate dehydrogenase (NADP(+)) (291 aa).

Residues Ser-26–Ser-28 and Ser-73 each bind shikimate. The active-site Proton acceptor is the Lys-77. Positions 98 and 113 each coordinate shikimate. Residues Gly-137–Ala-141 and Val-238 each bind NADP(+). Residue Tyr-240 coordinates shikimate. Gly-261 lines the NADP(+) pocket.

The protein belongs to the shikimate dehydrogenase family. As to quaternary structure, homodimer.

It carries out the reaction shikimate + NADP(+) = 3-dehydroshikimate + NADPH + H(+). Its pathway is metabolic intermediate biosynthesis; chorismate biosynthesis; chorismate from D-erythrose 4-phosphate and phosphoenolpyruvate: step 4/7. Functionally, involved in the biosynthesis of the chorismate, which leads to the biosynthesis of aromatic amino acids. Catalyzes the reversible NADPH linked reduction of 3-dehydroshikimate (DHSA) to yield shikimate (SA). This is Shikimate dehydrogenase (NADP(+)) from Listeria innocua serovar 6a (strain ATCC BAA-680 / CLIP 11262).